Reading from the N-terminus, the 406-residue chain is E3 ubiquitin-protein ligase RING1 (406 aa).

Position 24 is a phosphothreonine (T24). The interval 30–234 (MDGTEIAVSP…GGAGSEDSGD (205 aa)) is necessary for transcriptional repression. At S38 the chain carries Phosphoserine. The RING-type zinc finger occupies 48–88 (CPICLDMLKNTMTTKECLHRFCSDCIVTALRSGNKECPTCR). S140, S187, and S190 each carry phosphoserine. Disordered regions lie at residues 148–263 (QAMH…GEIE) and 309–354 (QQQE…PSLE). A compositionally biased stretch (acidic residues) spans 175–187 (EPGEGEGDGEDVS). Positions 201 to 204 (KRPR) match the Nuclear localization signal motif. Positions 205–228 (GGGAGGSSVGTGGGGTGGVGGGAG) are enriched in gly residues. T215 and T220 each carry phosphothreonine. Phosphoserine occurs at positions 229 and 232. Positions 230 to 406 (EDSGDRGGTL…LCYAPTKDPK (177 aa)) are necessary for interaction with CBX2. The segment covering 235–244 (RGGTLGGGTL) has biased composition (gly residues). Positions 246–258 (PPSPPGAPSPPEP) are enriched in pro residues. Phosphoserine is present on residues S248 and S254. A compositionally biased stretch (gly residues) spans 315–343 (EPGGPGGGASDTGGPDGCGGEGGGAGGGD).

In terms of assembly, component of chromatin-associated Polycomb (PcG) complexes. Interacts with BMI1. Part of the E2F6.com-1 complex in G0 phase composed of E2F6, MGA, MAX, TFDP1, CBX3, BAT8, EUHMTASE1, RING1, RNF2/RING2 MBLR, L3MBTL2 and YAF2. Interacts with CBX2 and PCGF6. Component of a PRC1-like complex. Component of repressive BCOR complex containing Polycomb group subcomplex at least composed of RYBP, PCGF1, BCOR and RNF2/RING2. Interacts with PCGF2, RNF2; CBX6, CBX7 and CBX8. Interacts with PHC2. Interacts with MN1. Interacts with USP26.

It localises to the nucleus. The protein resides in the nucleus speckle. The enzyme catalyses S-ubiquitinyl-[E2 ubiquitin-conjugating enzyme]-L-cysteine + [acceptor protein]-L-lysine = [E2 ubiquitin-conjugating enzyme]-L-cysteine + N(6)-ubiquitinyl-[acceptor protein]-L-lysine.. It functions in the pathway protein modification; protein ubiquitination. Constitutes one of the E3 ubiquitin-protein ligases that mediate monoubiquitination of 'Lys-119' of histone H2A, thereby playing a central role in histone code and gene regulation. H2A 'Lys-119' ubiquitination gives a specific tag for epigenetic transcriptional repression and participates in X chromosome inactivation of female mammals. Essential component of a Polycomb group (PcG) multiprotein PRC1-like complex, a complex class required to maintain the transcriptionally repressive state of many genes, including Hox genes, throughout development. PcG PRC1 complex acts via chromatin remodeling and modification of histones, rendering chromatin heritably changed in its expressibility. Compared to RNF2/RING2, it does not have the main E3 ubiquitin ligase activity on histone H2A, and it may rather act as a modulator of RNF2/RING2 activity. The chain is E3 ubiquitin-protein ligase RING1 from Homo sapiens (Human).